We begin with the raw amino-acid sequence, 503 residues long: Trehalose-6-phosphate synthase (503 aa).

Residues 1–14 (MTDQSGNGVRSGSA) show a composition bias toward polar residues. The disordered stretch occupies residues 1 to 20 (MTDQSGNGVRSGSASEAPPS). Arg31 provides a ligand contact to D-glucose 6-phosphate. UDP-alpha-D-glucose is bound at residue 51-52 (GG). D-glucose 6-phosphate is bound by residues Tyr109 and Asp163. Arg305 and Lys310 together coordinate UDP-alpha-D-glucose. Arg343 is a binding site for D-glucose 6-phosphate. Residue 408–412 (LVAKE) participates in UDP-alpha-D-glucose binding.

It belongs to the glycosyltransferase 20 family. As to quaternary structure, homotetramer.

It carries out the reaction ADP-alpha-D-glucose + D-glucose 6-phosphate = alpha,alpha-trehalose 6-phosphate + ADP + H(+). The enzyme catalyses CDP-alpha-D-glucose + D-glucose 6-phosphate = alpha,alpha-trehalose 6-phosphate + CDP + H(+). It catalyses the reaction GDP-alpha-D-glucose + D-glucose 6-phosphate = alpha,alpha-trehalose 6-phosphate + GDP + H(+). The catalysed reaction is TDP-alpha-D-glucose + D-glucose 6-phosphate = 5-methyl-UDP + alpha,alpha-trehalose 6-phosphate + H(+). It carries out the reaction D-glucose 6-phosphate + UDP-alpha-D-glucose = alpha,alpha-trehalose 6-phosphate + UDP + H(+). It participates in glycan biosynthesis; trehalose biosynthesis. In terms of biological role, probably involved in the osmoprotection via the biosynthesis of trehalose and in the production of glycogen and alpha-glucan via the TreS-Pep2 branch involved in the biosynthesis of maltose-1-phosphate (M1P). Catalyzes the transfer of glucose from UDP-glucose (UDP-Glc) to D-glucose 6-phosphate (Glc-6-P) to form trehalose-6-phosphate. Probably also able to use ADP-Glc, CDP-Glc, GDP-Glc and TDP-Glc as glucosyl donors. This is Trehalose-6-phosphate synthase from Mycolicibacterium gilvum (strain PYR-GCK) (Mycobacterium gilvum (strain PYR-GCK)).